Consider the following 1052-residue polypeptide: Carboxylic acid reductase (1052 aa).

The segment at 21 to 344 (RALNEPNREW…ATEFTPFPFY (324 aa)) is adenylation (A) domain. Residues 334-335 (SA), Thr339, and 419-422 (YQGR) each bind AMP. The region spanning 560-643 (SSSDALIVSI…RLADYLLSIV (84 aa)) is the Carrier domain. Ser595 bears the O-(pantetheine 4'-phosphoryl)serine mark. The carboxylic acid reductase (R) domain stretch occupies residues 684-979 (GQVVVITGTT…QKIVPLDEWL (296 aa)). NADP(+) contacts are provided by residues 693–696 (TGGI), Arg718, 774–776 (NQW), Ser814, Tyr844, and Lys848.

It belongs to the adenylate-forming reductase family. It depends on Mg(2+) as a cofactor.

It catalyses the reaction an aromatic aldehyde + AMP + diphosphate + NADP(+) = an aromatic carboxylate + ATP + NADPH + H(+). The enzyme catalyses a carboxylate + ATP + NADPH + H(+) = an aldehyde + AMP + diphosphate + NADP(+). It carries out the reaction benzoate + ATP + NADPH + H(+) = benzaldehyde + AMP + diphosphate + NADP(+). The catalysed reaction is (E)-cinnamate + ATP + NADPH + H(+) = (E)-cinnamaldehyde + AMP + diphosphate + NADP(+). It catalyses the reaction piperonylate + ATP + NADPH + H(+) = piperonal + AMP + diphosphate + NADP(+). The enzyme catalyses salicylate + ATP + NADPH + H(+) = salicylaldehyde + AMP + diphosphate + NADP(+). It carries out the reaction 3-hydroxybenzoate + ATP + NADPH + H(+) = 3-hydroxybenzaldehyde + AMP + diphosphate + NADP(+). The catalysed reaction is 2-methoxybenzoate + ATP + NADPH + H(+) = 2-methoxybenzaldehyde + AMP + diphosphate + NADP(+). It catalyses the reaction 3-methoxybenzoate + ATP + NADPH + H(+) = 3-methoxybenzaldehyde + AMP + diphosphate + NADP(+). The enzyme catalyses 4-hydroxybenzoate + ATP + NADPH + H(+) = 4-hydroxybenzaldehyde + AMP + diphosphate + NADP(+). It carries out the reaction 4-methoxybenzoate + ATP + NADPH + H(+) = 4-methoxybenzaldehyde + AMP + diphosphate + NADP(+). The catalysed reaction is 3-phenylpropanoate + ATP + NADPH + H(+) = 3-phenylpropanal + AMP + diphosphate + NADP(+). It catalyses the reaction picolinate + ATP + NADPH + H(+) = picolinal + AMP + diphosphate + NADP(+). The enzyme catalyses propanoate + ATP + NADPH + H(+) = propanal + AMP + diphosphate + NADP(+). It carries out the reaction butanoate + ATP + NADPH + H(+) = butanal + AMP + diphosphate + NADP(+). The catalysed reaction is pentanoate + ATP + NADPH + H(+) = pentanal + AMP + diphosphate + NADP(+). It catalyses the reaction hexanoate + ATP + NADPH + H(+) = hexanal + AMP + diphosphate + NADP(+). The enzyme catalyses heptanoate + ATP + NADPH + H(+) = heptanal + AMP + diphosphate + NADP(+). It carries out the reaction octanoate + ATP + NADPH + H(+) = octanal + AMP + diphosphate + NADP(+). The catalysed reaction is nonanoate + ATP + NADPH + H(+) = nonanal + AMP + diphosphate + NADP(+). Its function is as follows. Carboxylic acid reductase that shows a broad range of substrate specificity towards aromatic acids, especially to phenyl carboxylic and phenyl acrylic acids, to convert them into their respective aldehydes. Also able to use aliphatic acids as substrates. The sequence is that of Carboxylic acid reductase from Neurospora crassa (strain ATCC 24698 / 74-OR23-1A / CBS 708.71 / DSM 1257 / FGSC 987).